The chain runs to 205 residues: Imidazole glycerol phosphate synthase subunit HisH (205 aa).

The 205-residue stretch at 1–205 (MIALVDYGGG…FFKMALGDKK (205 aa)) folds into the Glutamine amidotransferase type-1 domain. The Nucleophile role is filled by C79. Active-site residues include H181 and E183.

In terms of assembly, heterodimer of HisH and HisF.

It is found in the cytoplasm. It catalyses the reaction 5-[(5-phospho-1-deoxy-D-ribulos-1-ylimino)methylamino]-1-(5-phospho-beta-D-ribosyl)imidazole-4-carboxamide + L-glutamine = D-erythro-1-(imidazol-4-yl)glycerol 3-phosphate + 5-amino-1-(5-phospho-beta-D-ribosyl)imidazole-4-carboxamide + L-glutamate + H(+). The enzyme catalyses L-glutamine + H2O = L-glutamate + NH4(+). It participates in amino-acid biosynthesis; L-histidine biosynthesis; L-histidine from 5-phospho-alpha-D-ribose 1-diphosphate: step 5/9. Functionally, IGPS catalyzes the conversion of PRFAR and glutamine to IGP, AICAR and glutamate. The HisH subunit catalyzes the hydrolysis of glutamine to glutamate and ammonia as part of the synthesis of IGP and AICAR. The resulting ammonia molecule is channeled to the active site of HisF. The chain is Imidazole glycerol phosphate synthase subunit HisH from Dehalococcoides mccartyi (strain CBDB1).